Here is a 292-residue protein sequence, read N- to C-terminus: Elongation factor Ts (292 aa).

The interval 82–85 (TDFV) is involved in Mg(2+) ion dislocation from EF-Tu.

It belongs to the EF-Ts family.

The protein resides in the cytoplasm. Functionally, associates with the EF-Tu.GDP complex and induces the exchange of GDP to GTP. It remains bound to the aminoacyl-tRNA.EF-Tu.GTP complex up to the GTP hydrolysis stage on the ribosome. The chain is Elongation factor Ts from Bordetella avium (strain 197N).